Reading from the N-terminus, the 25-residue chain is Histone H4 (25 aa).

A compositionally biased stretch (gly residues) spans 1–14; it reads MSGRGKGGKGLGKG. The disordered stretch occupies residues 1-25; the sequence is MSGRGKGGKGLGKGGAKRHRKVLRD. Position 2 is an N-acetylserine (serine 2). N6-acetyllysine occurs at positions 6, 9, 13, 17, and 21. A compositionally biased stretch (basic residues) spans 15 to 25; sequence GAKRHRKVLRD. A DNA-binding region spans residues 17–21; it reads KRHRK.

The protein belongs to the histone H4 family. In terms of assembly, the nucleosome is a histone octamer containing two molecules each of H2A, H2B, H3 and H4 assembled in one H3-H4 heterotetramer and two H2A-H2B heterodimers. The octamer wraps approximately 147 bp of DNA.

Its subcellular location is the nucleus. It is found in the chromosome. Core component of nucleosome. Nucleosomes wrap and compact DNA into chromatin, limiting DNA accessibility to the cellular machineries which require DNA as a template. Histones thereby play a central role in transcription regulation, DNA repair, DNA replication and chromosomal stability. DNA accessibility is regulated via a complex set of post-translational modifications of histones, also called histone code, and nucleosome remodeling. This is Histone H4 from Medicago sativa (Alfalfa).